The chain runs to 315 residues: DNA-directed RNA polymerase subunit alpha (315 aa).

The interval 1–228 is alpha N-terminal domain (alpha-NTD); sequence MLEIEKPKIE…EHLRLFIGLT (228 aa). An alpha C-terminal domain (alpha-CTD) region spans residues 246–315; sequence DKILEMTIEE…LGLSLRQEDE (70 aa).

It belongs to the RNA polymerase alpha chain family. Homodimer. The RNAP catalytic core consists of 2 alpha, 1 beta, 1 beta' and 1 omega subunit. When a sigma factor is associated with the core the holoenzyme is formed, which can initiate transcription.

It carries out the reaction RNA(n) + a ribonucleoside 5'-triphosphate = RNA(n+1) + diphosphate. Functionally, DNA-dependent RNA polymerase catalyzes the transcription of DNA into RNA using the four ribonucleoside triphosphates as substrates. This is DNA-directed RNA polymerase subunit alpha from Desulforamulus reducens (strain ATCC BAA-1160 / DSM 100696 / MI-1) (Desulfotomaculum reducens).